Here is a 176-residue protein sequence, read N- to C-terminus: NAD(P)H-quinone oxidoreductase subunit J (176 aa).

Composition is skewed to polar residues over residues Met-1–Thr-12 and Ile-20–Pro-30. Positions Met-1–Pro-30 are disordered.

Belongs to the complex I 30 kDa subunit family. As to quaternary structure, NDH-1 can be composed of about 15 different subunits; different subcomplexes with different compositions have been identified which probably have different functions.

Its subcellular location is the cellular thylakoid membrane. The enzyme catalyses a plastoquinone + NADH + (n+1) H(+)(in) = a plastoquinol + NAD(+) + n H(+)(out). It carries out the reaction a plastoquinone + NADPH + (n+1) H(+)(in) = a plastoquinol + NADP(+) + n H(+)(out). In terms of biological role, NDH-1 shuttles electrons from an unknown electron donor, via FMN and iron-sulfur (Fe-S) centers, to quinones in the respiratory and/or the photosynthetic chain. The immediate electron acceptor for the enzyme in this species is believed to be plastoquinone. Couples the redox reaction to proton translocation, and thus conserves the redox energy in a proton gradient. Cyanobacterial NDH-1 also plays a role in inorganic carbon-concentration. The protein is NAD(P)H-quinone oxidoreductase subunit J of Prochlorococcus marinus (strain AS9601).